Reading from the N-terminus, the 456-residue chain is MDIKTLKGFKDYLPKDSLIRIHIVRQIFSVLNSYNFDLIDTPVLEYSDLLLKKSGDETEKQIYRFKDNGGRDVSMRFDLTVPFARFVATNISALKLPFRRSQFGKVFRGENSQKGRYREFMQFDFDIVGEDTFRGDAEILSVVYYGLEEIFLNFIEGINKKFIIHYSHIGILNSFFEKLGLKEKSIFILRNIDKIDKIGIDKVKEALLLEIEKEAVDSILSLVSLQGTFKDKIQALKSILGDNESIKRVEDVFQHLSLLKIQDSFNLNLKISRGLDYYTGIVFESEVFGSNMGSVCSGGRYDNLVSSFSNSIQKISGVGGSFGVDRIKDIIDLEKFSYIKIFVTKARSKVLIVNLDSALQNYYYELATRFRNHDYSKVKNISCEVYFKNKNGKNIKEQIEYALSKEIRFLVFVGQEEYKENKMKVRDLTKKEELLLSFEESINLIKCNEKLLCTPF.

It belongs to the class-II aminoacyl-tRNA synthetase family. In terms of assembly, homodimer.

The protein localises to the cytoplasm. It catalyses the reaction tRNA(His) + L-histidine + ATP = L-histidyl-tRNA(His) + AMP + diphosphate + H(+). In Borreliella burgdorferi (strain ATCC 35210 / DSM 4680 / CIP 102532 / B31) (Borrelia burgdorferi), this protein is Histidine--tRNA ligase (hisS).